A 106-amino-acid chain; its full sequence is Iron-sulfur cluster assembly protein CyaY (106 aa).

This sequence belongs to the frataxin family.

Functionally, involved in iron-sulfur (Fe-S) cluster assembly. May act as a regulator of Fe-S biogenesis. This is Iron-sulfur cluster assembly protein CyaY from Shigella flexneri.